The following is a 351-amino-acid chain: Methionine import ATP-binding protein MetN (351 aa).

In terms of domain architecture, ABC transporter spans 4–249 (VQLDHVSVTF…PKAELTQKFV (246 aa)). Residue 41 to 48 (GFSGAGKS) coordinates ATP.

It belongs to the ABC transporter superfamily. Methionine importer (TC 3.A.1.24) family. The complex is composed of two ATP-binding proteins (MetN), two transmembrane proteins (MetI) and a solute-binding protein (MetQ).

The protein resides in the cell membrane. It catalyses the reaction L-methionine(out) + ATP + H2O = L-methionine(in) + ADP + phosphate + H(+). The enzyme catalyses D-methionine(out) + ATP + H2O = D-methionine(in) + ADP + phosphate + H(+). In terms of biological role, part of the ABC transporter complex MetNIQ involved in methionine import. Responsible for energy coupling to the transport system. This chain is Methionine import ATP-binding protein MetN, found in Lactobacillus delbrueckii subsp. bulgaricus (strain ATCC BAA-365 / Lb-18).